The sequence spans 152 residues: Small ribosomal subunit protein uS19x (152 aa).

The protein belongs to the universal ribosomal protein uS19 family.

The protein localises to the cytoplasm. This is Small ribosomal subunit protein uS19x (RPS15D) from Arabidopsis thaliana (Mouse-ear cress).